A 70-amino-acid polypeptide reads, in one-letter code: Large ribosomal subunit protein eL43 (70 aa).

The Zn(2+) site is built by Cys36, Cys39, Cys55, and Cys58. A C4-type zinc finger spans residues 36–58 (CPVCKTTGKVVRIASGVWYCKKC).

The protein belongs to the eukaryotic ribosomal protein eL43 family. Putative zinc-binding subfamily. In terms of assembly, part of the 50S ribosomal subunit. It depends on Zn(2+) as a cofactor.

In terms of biological role, binds to the 23S rRNA. This is Large ribosomal subunit protein eL43 from Sulfurisphaera tokodaii (strain DSM 16993 / JCM 10545 / NBRC 100140 / 7) (Sulfolobus tokodaii).